Consider the following 376-residue polypeptide: Transcription initiation factor IIA subunit 1 (376 aa).

Residue alanine 2 is modified to N-acetylalanine. Low complexity-rich tracts occupy residues 69–79 and 89–105; these read QVQQQHQPQQQ and QAQP…TQQV. Disordered regions lie at residues 69–107, 247–266, and 274–329; these read QVQQ…QVLI, QAQI…AQTQ, and DGTG…QELF. Residues serine 280, serine 281, serine 316, and serine 321 each carry the phosphoserine; by TAF1 modification. Positions 280–329 are enriched in acidic residues; the sequence is SSEEDEDEEEDYDDDEEEDKEKDGAEDGQVEEEPLNSEDDVSDEEGQELF. Histidine 343 and arginine 344 together coordinate DNA.

It belongs to the TFIIA subunit 1 family. TFIIA is a heterodimer of the large unprocessed subunit 1 and a small subunit gamma. It was originally believed to be a heterotrimer of an alpha (p35), a beta (p19) and a gamma subunit (p12). TFIIA forms a complex with TBP. Part of TBP-based Pol II pre-initiation complex (PIC), in which Pol II core assembles with general transcription factors and other specific initiation factors including GTF2E1, GTF2E2, GTF2F1, GTF2F2, TCEA1, ERCC2, ERCC3, GTF2H2, GTF2H3, GTF2H4, GTF2H5, GTF2A1, GTF2A2, GTF2B and TBP; this large multi-subunit PIC complex mediates DNA unwinding and targets Pol II core to the transcription start site where the first phosphodiester bond forms. The alpha and beta subunits are postranslationally produced from the precursor form by TASP1. The cleavage promotes proteasomal degradation.

The protein localises to the nucleus. Its function is as follows. TFIIA is a component of the transcription machinery of RNA polymerase II and plays an important role in transcriptional activation. TFIIA in a complex with TBP mediates transcriptional activity. The chain is Transcription initiation factor IIA subunit 1 (GTF2A1) from Homo sapiens (Human).